We begin with the raw amino-acid sequence, 415 residues long: Serine hydroxymethyltransferase (415 aa).

Residues Leu117 and 121–123 (GHL) each bind (6S)-5,6,7,8-tetrahydrofolate. Residue Lys226 is modified to N6-(pyridoxal phosphate)lysine.

This sequence belongs to the SHMT family. Homodimer. It depends on pyridoxal 5'-phosphate as a cofactor.

It localises to the cytoplasm. The catalysed reaction is (6R)-5,10-methylene-5,6,7,8-tetrahydrofolate + glycine + H2O = (6S)-5,6,7,8-tetrahydrofolate + L-serine. It participates in one-carbon metabolism; tetrahydrofolate interconversion. The protein operates within amino-acid biosynthesis; glycine biosynthesis; glycine from L-serine: step 1/1. Catalyzes the reversible interconversion of serine and glycine with tetrahydrofolate (THF) serving as the one-carbon carrier. This reaction serves as the major source of one-carbon groups required for the biosynthesis of purines, thymidylate, methionine, and other important biomolecules. Also exhibits THF-independent aldolase activity toward beta-hydroxyamino acids, producing glycine and aldehydes, via a retro-aldol mechanism. The chain is Serine hydroxymethyltransferase from Dehalococcoides mccartyi (strain CBDB1).